A 711-amino-acid polypeptide reads, in one-letter code: Ecdysone-inducible protein E75 (711 aa).

Residues 44 to 120 (TVLCRVCGDK…VGMSRDAVRF (77 aa)) constitute a DNA-binding region (nuclear receptor). 2 consecutive NR C4-type zinc fingers follow at residues 47–67 (CRVC…CEGC) and 84–108 (CTKN…LKKC). Residues 153–400 (DGPRLLARVV…QQMWVEDEGA (248 aa)) enclose the NR LBD domain. Disordered regions lie at residues 405-432 (SGAD…DCGT), 466-530 (LTVT…DMPV), 559-602 (AMRR…PIRA), and 680-711 (DAPQ…MLPA). 2 stretches are compositionally biased toward basic and acidic residues: residues 511 to 521 (SLEEHSDDRRP) and 560 to 572 (MRRD…EARP). Pro residues predominate over residues 574–590 (RPTPSPQPPHHPHPASP). 2 stretches are compositionally biased toward low complexity: residues 591–602 (AHPAHSPRPIRA) and 682–692 (PQPLNLSKKSP). The segment covering 693–711 (SPSPPPPPPRSYMPPMLPA) has biased composition (pro residues).

This sequence belongs to the nuclear hormone receptor family. NR1 subfamily.

It localises to the nucleus. In terms of biological role, orphan receptor possibly involved in the regulation of genes in the ecdysteroid cascade. The polypeptide is Ecdysone-inducible protein E75 (E75) (Galleria mellonella (Greater wax moth)).